A 2280-amino-acid polypeptide reads, in one-letter code: Protein Ycf2 (2280 aa).

Residue 1634–1641 (GSIGTGRS) coordinates ATP.

Belongs to the Ycf2 family.

It is found in the plastid. The protein localises to the chloroplast stroma. Probable ATPase of unknown function. Its presence in a non-photosynthetic plant (Epifagus virginiana) and experiments in tobacco indicate that it has an essential function which is probably not related to photosynthesis. This chain is Protein Ycf2, found in Eucalyptus globulus subsp. globulus (Tasmanian blue gum).